Reading from the N-terminus, the 145-residue chain is Deoxyuridine 5'-triphosphate nucleotidohydrolase (145 aa).

Substrate-binding positions include 63 to 65 (RSG), Q76, and 80 to 82 (TVD).

This sequence belongs to the dUTPase family. Mg(2+) serves as cofactor.

It catalyses the reaction dUTP + H2O = dUMP + diphosphate + H(+). The protein operates within pyrimidine metabolism; dUMP biosynthesis; dUMP from dCTP (dUTP route): step 2/2. In terms of biological role, this enzyme is involved in nucleotide metabolism: it produces dUMP, the immediate precursor of thymidine nucleotides and it decreases the intracellular concentration of dUTP so that uracil cannot be incorporated into DNA. The protein is Deoxyuridine 5'-triphosphate nucleotidohydrolase of Chlamydia muridarum (strain MoPn / Nigg).